The following is a 54-amino-acid chain: UPF0391 membrane protein Bpro_0879 (54 aa).

Helical transmembrane passes span 6-26 (VVFL…IAAG) and 30-50 (IAKI…VMGL).

This sequence belongs to the UPF0391 family.

It localises to the cell membrane. This Polaromonas sp. (strain JS666 / ATCC BAA-500) protein is UPF0391 membrane protein Bpro_0879.